A 692-amino-acid polypeptide reads, in one-letter code: MVAQINLKDVRNIGIMAHIDAGKTTTTERILYYTGRSHKIGEVHDGNAVMDWMEQEQERGITITSAATTCIWKGKKINIIDTPGHVDFTVEVERSLRVLDGVVAVFCAVGGVEPQSETVWRQANKYFIPRVAFINKMDRVGADFDHCLAMIEKRLRANPVAVQIPVGSEAEFAGVIDLIEGEMYAFDDATLGQEVERREVPTEYKERFTAARISLLEKLADFDEELMEKFLDDELISSATIYKALRKATLALELVPVFCGSAFKNKGVQPLLDGVVNYLPSPLDVKPVEGVDKDGVEVSRKADPSEKFAGLVFKLMSDSFVENLAFIRVYSGTLKQGDKVFNPIKGKQEKIGKLLRLHANKREEVKEIVAGDIGAVVGLKFTTTGDTLCEKEAQIILESMEFPDPVIGVAIEPSSKADEKKLTESLAKIALEDPSFVVSQNEDTGQTIISGMGELHLEIIVYRLLNEFKVAARVGTPQVSYKESIQRSHSAEGLFEQPTGSSNQFAKVVLEIEPLERGAGIEFVCEVDEKQIPAEFLGAVERGVVDSLDSGPLVGYPVTDVRVRLVGGAYHEEDSTEMAFGVSASIAVRKAASEADSVLLEPIMSLEVITPDEYLGDAIGDLNKKRAKVVGVEVEGDLQKLLAHVPLSEMFGYSTSLRSATQGRANFTMQFLAYDVVPANKAETIIKKIRGI.

The tr-type G domain maps to 8-283; the sequence is KDVRNIGIMA…GVVNYLPSPL (276 aa). Residues 17 to 24, 81 to 85, and 135 to 138 each bind GTP; these read AHIDAGKT, DTPGH, and NKMD.

Belongs to the TRAFAC class translation factor GTPase superfamily. Classic translation factor GTPase family. EF-G/EF-2 subfamily.

It is found in the cytoplasm. Its function is as follows. Catalyzes the GTP-dependent ribosomal translocation step during translation elongation. During this step, the ribosome changes from the pre-translocational (PRE) to the post-translocational (POST) state as the newly formed A-site-bound peptidyl-tRNA and P-site-bound deacylated tRNA move to the P and E sites, respectively. Catalyzes the coordinated movement of the two tRNA molecules, the mRNA and conformational changes in the ribosome. The protein is Elongation factor G 2 of Desulfotalea psychrophila (strain LSv54 / DSM 12343).